We begin with the raw amino-acid sequence, 258 residues long: Imidazole glycerol phosphate synthase subunit HisF (258 aa).

Active-site residues include Asp-11 and Asp-130.

Belongs to the HisA/HisF family. Heterodimer of HisH and HisF.

It localises to the cytoplasm. The catalysed reaction is 5-[(5-phospho-1-deoxy-D-ribulos-1-ylimino)methylamino]-1-(5-phospho-beta-D-ribosyl)imidazole-4-carboxamide + L-glutamine = D-erythro-1-(imidazol-4-yl)glycerol 3-phosphate + 5-amino-1-(5-phospho-beta-D-ribosyl)imidazole-4-carboxamide + L-glutamate + H(+). Its pathway is amino-acid biosynthesis; L-histidine biosynthesis; L-histidine from 5-phospho-alpha-D-ribose 1-diphosphate: step 5/9. Its function is as follows. IGPS catalyzes the conversion of PRFAR and glutamine to IGP, AICAR and glutamate. The HisF subunit catalyzes the cyclization activity that produces IGP and AICAR from PRFAR using the ammonia provided by the HisH subunit. This chain is Imidazole glycerol phosphate synthase subunit HisF, found in Xanthomonas euvesicatoria pv. vesicatoria (strain 85-10) (Xanthomonas campestris pv. vesicatoria).